The sequence spans 89 residues: Small ribosomal subunit protein bS16c (89 aa).

This sequence belongs to the bacterial ribosomal protein bS16 family.

It is found in the plastid. It localises to the chloroplast. The polypeptide is Small ribosomal subunit protein bS16c (Drimys granadensis).